The primary structure comprises 101 residues: Replication restart protein PriB (101 aa).

In terms of domain architecture, SSB spans 1–101 (MATNHLVLSG…LHAENVELKT (101 aa)).

It belongs to the PriB family. Homodimer. Interacts with PriA and DnaT. Component of the replication restart primosome. Primosome assembly occurs via a 'hand-off' mechanism. PriA binds to replication forks, subsequently PriB then DnaT bind; DnaT then displaces ssDNA to generate the helicase loading substrate.

In terms of biological role, involved in the restart of stalled replication forks, which reloads the replicative helicase on sites other than the origin of replication; the PriA-PriB pathway is the major replication restart pathway. During primosome assembly it facilitates complex formation between PriA and DnaT on DNA; stabilizes PriA on DNA. Stimulates the DNA unwinding activity of PriA helicase. In Shewanella sediminis (strain HAW-EB3), this protein is Replication restart protein PriB.